The sequence spans 267 residues: UPF0328 protein ECU06_0070 (267 aa).

Belongs to the UPF0328 family.

This chain is UPF0328 protein ECU06_0070, found in Encephalitozoon cuniculi (strain GB-M1) (Microsporidian parasite).